The following is a 346-amino-acid chain: L-threonine dehydratase catabolic TdcB (346 aa).

Residue 59 to 60 (FT) participates in AMP binding. Lysine 64 is modified (N6-(pyridoxal phosphate)lysine). AMP-binding positions include glutamine 94, 125–126 (GY), and asparagine 321.

It belongs to the serine/threonine dehydratase family. In terms of assembly, in the native structure, TdcB is in a dimeric form, whereas in the TdcB-AMP complex, it exists in a tetrameric form (dimer of dimers). Requires pyridoxal 5'-phosphate as cofactor.

It catalyses the reaction L-threonine = 2-oxobutanoate + NH4(+). The protein operates within amino-acid degradation; L-threonine degradation via propanoate pathway; propanoate from L-threonine: step 1/4. Each protein molecule can bind up to four molecules of AMP, which act as an allosteric activator to the enzyme. Its function is as follows. Catalyzes the anaerobic formation of alpha-ketobutyrate and ammonia from threonine in a two-step reaction. The first step involved a dehydration of threonine and a production of enamine intermediates (aminocrotonate), which tautomerizes to its imine form (iminobutyrate). Both intermediates are unstable and short-lived. The second step is the nonenzymatic hydrolysis of the enamine/imine intermediates to form 2-ketobutyrate and free ammonia. In the low water environment of the cell, the second step is accelerated by RidA. This Staphylococcus aureus (strain Mu50 / ATCC 700699) protein is L-threonine dehydratase catabolic TdcB (tdcB).